The primary structure comprises 456 residues: Adenylosuccinate lyase (456 aa).

N(6)-(1,2-dicarboxyethyl)-AMP contacts are provided by residues 15-16 (RY), 90-92 (NHD), and 122-123 (TS). H171 serves as the catalytic Proton donor/acceptor. Q247 serves as a coordination point for N(6)-(1,2-dicarboxyethyl)-AMP. S295 (proton donor/acceptor) is an active-site residue. N(6)-(1,2-dicarboxyethyl)-AMP is bound by residues S296, 301–303 (KVN), N309, R335, and 340–344 (STVLR).

The protein belongs to the lyase 1 family. Adenylosuccinate lyase subfamily. In terms of assembly, homotetramer. Residues from neighboring subunits contribute catalytic and substrate-binding residues to each active site.

The enzyme catalyses N(6)-(1,2-dicarboxyethyl)-AMP = fumarate + AMP. It catalyses the reaction (2S)-2-[5-amino-1-(5-phospho-beta-D-ribosyl)imidazole-4-carboxamido]succinate = 5-amino-1-(5-phospho-beta-D-ribosyl)imidazole-4-carboxamide + fumarate. It participates in purine metabolism; AMP biosynthesis via de novo pathway; AMP from IMP: step 2/2. The protein operates within purine metabolism; IMP biosynthesis via de novo pathway; 5-amino-1-(5-phospho-D-ribosyl)imidazole-4-carboxamide from 5-amino-1-(5-phospho-D-ribosyl)imidazole-4-carboxylate: step 2/2. Its function is as follows. Catalyzes two reactions in de novo purine nucleotide biosynthesis. Catalyzes the breakdown of 5-aminoimidazole- (N-succinylocarboxamide) ribotide (SAICAR or 2-[5-amino-1-(5-phospho-beta-D-ribosyl)imidazole-4-carboxamido]succinate) to 5-aminoimidazole-4-carboxamide ribotide (AICAR or 5-amino-1-(5-phospho-beta-D-ribosyl)imidazole-4-carboxamide) and fumarate, and of adenylosuccinate (ADS or N(6)-(1,2-dicarboxyethyl)-AMP) to adenosine monophosphate (AMP) and fumarate. The chain is Adenylosuccinate lyase (purB) from Legionella pneumophila subsp. pneumophila (strain Philadelphia 1 / ATCC 33152 / DSM 7513).